Here is a 3828-residue protein sequence, read N- to C-terminus: Histone-lysine N-methyltransferase trithorax (3828 aa).

3 disordered regions span residues 25–179 (EDEA…AAAA), 356–390 (AVKS…ATKQ), and 512–589 (FRKQ…RSTR). Residues 29–57 (ASAAAAAAAATAATTEQHQQSEQSAGSSA) are compositionally biased toward low complexity. Over residues 77-89 (AATSGNRGASSGA) the composition is skewed to polar residues. Positions 101–114 (GNGSSTGSKTTNGG) are enriched in low complexity. The segment covering 152–165 (DGTEDTNNDDDDDS) has biased composition (acidic residues). Over residues 359–387 (SSGSSPNPNHNPNAVAGSTSAAAPGAPTA) the composition is skewed to low complexity. A compositionally biased stretch (basic and acidic residues) spans 513–523 (RKQEPQHKTPE). Residues 524–553 (DNDDDGSASSDAIEDDEDIDDDDAEENEEA) show a composition bias toward acidic residues. The segment covering 554–581 (ASEKSAETTASVDEKEADDRQLVMDKHF) has biased composition (basic and acidic residues). Positions 725–839 (ASTCAVCSAP…AGHRSRLSAI (115 aa)) form a DNA-binding region, nuclear receptor. Disordered stretches follow at residues 933–1036 (ESKE…SAVP), 1075–1094 (ELAA…TTSP), and 1131–1170 (AQPA…TTRN). Positions 960 to 974 (AKQDKEKARELEAEK) are enriched in basic and acidic residues. 2 stretches are compositionally biased toward low complexity: residues 998–1022 (ASTT…TNSS) and 1078–1094 (AAEA…TTSP). The segment covering 1140–1170 (ESRSSKSNTQTEAKKTPATSGSSKGKVTTRN) has biased composition (polar residues). PHD-type zinc fingers lie at residues 1251–1334 (RALC…CTVC), 1335–1380 (YTCN…CLKC), and 1408–1469 (GNFC…CARR). The Bromo domain occupies 1483 to 1644 (AVMEEFKSSL…SEQFPWFQNE (162 aa)). A C2HC pre-PHD-type zinc finger spans residues 1708–1748 (TRVCLFCRKSGEGLSGEEARLLYCGHDCWVHINCAMWSAEV). The PHD-type 4 zinc-finger motif lies at 1769 to 1816 (IKCTVCGNRGATVGCNVKSCGEHYHYPCARTIDCAFLTDKSMYCPAHA). Residues 1856–1913 (KVQFHIGSVAVRQLGSIVPRFSDSFEAIVPINFLCSRLYWSSKEPWKIVEYTVRTTIQ) enclose the FYR N-terminal domain. 8 disordered regions span residues 2252–2272 (CEPM…AQLS), 2464–2510 (AHQK…QQQQ), 2826–2848 (RNTN…PQQS), 2897–2973 (RQQQ…SPAA), 2988–3031 (APAP…QLSM), 3117–3178 (ASAN…VPAG), 3314–3338 (NGSG…DDDD), and 3457–3487 (KLDV…PMRD). Composition is skewed to low complexity over residues 2253-2268 (EPMS…ATGT), 2483-2510 (QGQQ…QQQQ), and 2836-2848 (SVLS…PQQS). The span at 2897-2917 (RQQQANELKNKQAAGQQTGST) shows a compositional bias: polar residues. Low complexity-rich tracts occupy residues 2956–2973 (ATSA…SPAA), 2988–2997 (APAPQPQQQE), 3005–3031 (LHQQ…QLSM), and 3117–3132 (ASAN…QQNS). The segment covering 3148-3164 (QQRQEPTPLSNDVVVQS) has biased composition (polar residues). Residues 3328–3338 (DDAEEDEDDDD) show a composition bias toward acidic residues. An FYR C-terminal domain is found at 3493–3577 (GPHLLYEIQS…EKCVKYTPKY (85 aa)). One can recognise an SET domain in the interval 3690-3806 (DYVGVFRSHI…QGEELTYDYK (117 aa)). S-adenosyl-L-methionine is bound by residues H3700, R3702, Y3744, and 3767 to 3768 (NH). The Zn(2+) site is built by C3770, C3816, C3818, and C3823. Residues 3812–3828 (EKIPCSCGSKRCRKYLN) form the Post-SET domain.

It belongs to the class V-like SAM-binding methyltransferase superfamily. Histone-lysine methyltransferase family. TRX/MLL subfamily. As to quaternary structure, interacts with ash1 via its SET domain.

It localises to the nucleus. The enzyme catalyses L-lysyl(9)-[histone H3] + 3 S-adenosyl-L-methionine = N(6),N(6),N(6)-trimethyl-L-lysyl(9)-[histone H3] + 3 S-adenosyl-L-homocysteine + 3 H(+). Functionally, histone methyltransferase that methylates 'Lys-4' of histone H3 (H3K4me). H3K4me represents a specific tag for epigenetic transcriptional activation. Functions in segment determination through interaction with genes of bithorax (BX-C) and antennapedia (ANT-C) complexes. Acts as an activator of BX-C. Involved in the very early regulation of homeotic genes expressed only in the posterior region of the embryo. In Drosophila virilis (Fruit fly), this protein is Histone-lysine N-methyltransferase trithorax (trx).